Here is a 69-residue protein sequence, read N- to C-terminus: DNA-directed RNA polymerase subunit omega (69 aa).

It belongs to the RNA polymerase subunit omega family. The RNAP catalytic core consists of 2 alpha, 1 beta, 1 beta' and 1 omega subunit. When a sigma factor is associated with the core the holoenzyme is formed, which can initiate transcription.

The catalysed reaction is RNA(n) + a ribonucleoside 5'-triphosphate = RNA(n+1) + diphosphate. Promotes RNA polymerase assembly. Latches the N- and C-terminal regions of the beta' subunit thereby facilitating its interaction with the beta and alpha subunits. This Pelotomaculum thermopropionicum (strain DSM 13744 / JCM 10971 / SI) protein is DNA-directed RNA polymerase subunit omega.